Reading from the N-terminus, the 249-residue chain is Segregation and condensation protein A (249 aa).

It belongs to the ScpA family. In terms of assembly, component of a cohesin-like complex composed of ScpA, ScpB and the Smc homodimer, in which ScpA and ScpB bind to the head domain of Smc. The presence of the three proteins is required for the association of the complex with DNA.

It is found in the cytoplasm. In terms of biological role, participates in chromosomal partition during cell division. May act via the formation of a condensin-like complex containing Smc and ScpB that pull DNA away from mid-cell into both cell halves. The protein is Segregation and condensation protein A of Clostridium acetobutylicum (strain ATCC 824 / DSM 792 / JCM 1419 / IAM 19013 / LMG 5710 / NBRC 13948 / NRRL B-527 / VKM B-1787 / 2291 / W).